The chain runs to 282 residues: Heat stress transcription factor A-7b (282 aa).

Low complexity-rich tracts occupy residues 1–11 and 120–134; these read MDPSSSSRARS and SSSS…QSQP. Disordered regions lie at residues 1 to 24 and 117 to 139; these read MDPS…LQEA and RRTS…AHDP. Residues 26 to 120 mediate DNA binding; that stretch reads PSPFLTKTFE…LLKSIKRRTS (95 aa). The interval 137-196 is hydrophobic repeat HR-A/B; sequence HDPGVELPQLREERHVLMMEISTLRQEEQRARGYVQAMEQRINGAEKKQRHMMSFLRRAV. The Nuclear localization signal signature appears at 208–212; the sequence is QKRDR. A Nuclear export signal motif is present at residues 232–240; sequence LSELEALAL. The AHA signature appears at 259-268; it reads DGFWEELLMN.

This sequence belongs to the HSF family. Class A subfamily. In terms of assembly, homotrimer. Post-translationally, exhibits temperature-dependent phosphorylation.

The protein resides in the cytoplasm. The protein localises to the nucleus. Its function is as follows. Transcriptional activator that specifically binds DNA sequence 5'-AGAAnnTTCT-3' known as heat shock promoter elements (HSE). The sequence is that of Heat stress transcription factor A-7b (HSFA7B) from Arabidopsis thaliana (Mouse-ear cress).